The following is a 421-amino-acid chain: Acetate kinase (421 aa).

Residue asparagine 7 participates in Mg(2+) binding. Lysine 14 contacts ATP. Arginine 91 lines the substrate pocket. The active-site Proton donor/acceptor is aspartate 148. Residues 208–212 and 283–285 each bind ATP; these read HIGNG and DRR. Residue glutamate 387 participates in Mg(2+) binding.

This sequence belongs to the acetokinase family. Homodimer. Requires Mg(2+) as cofactor. It depends on Mn(2+) as a cofactor.

It is found in the cytoplasm. It carries out the reaction acetate + ATP = acetyl phosphate + ADP. It functions in the pathway metabolic intermediate biosynthesis; acetyl-CoA biosynthesis; acetyl-CoA from acetate: step 1/2. Functionally, catalyzes the formation of acetyl phosphate from acetate and ATP. Can also catalyze the reverse reaction. The polypeptide is Acetate kinase (Geobacter sulfurreducens (strain ATCC 51573 / DSM 12127 / PCA)).